The primary structure comprises 25 residues: Androctonin (25 aa).

2 disulfide bridges follow: C4–C20 and C10–C16.

It localises to the secreted. Functionally, active against both bacteria (Gram-positive and Gram-negative) and filamentous fungi. Acts on the membrane of the bacterial cells. It destabilize a membrane by modifying its properties. This Androctonus australis (Sahara scorpion) protein is Androctonin.